The sequence spans 320 residues: Endochitinase (320 aa).

An N-terminal signal peptide occupies residues 1 to 23 (MKRTLKVSFFILCLLPLFLGSKA). The Chitin-binding type-1 domain maps to 24 to 64 (EQCGSQAGGAVCPNGLCCSKFGFCGSTDPYCGDGCQSQCKS). 7 disulfides stabilise this stretch: C26–C41, C35–C47, C40–C54, C58–C62, C101–C163, C175–C182, and C281–C313. E145 functions as the Proton donor in the catalytic mechanism.

Belongs to the glycosyl hydrolase 19 family. Chitinase class I subfamily.

The catalysed reaction is Random endo-hydrolysis of N-acetyl-beta-D-glucosaminide (1-&gt;4)-beta-linkages in chitin and chitodextrins.. Defense against chitin-containing fungal pathogens. The chain is Endochitinase from Pisum sativum (Garden pea).